Reading from the N-terminus, the 572-residue chain is Urease subunit alpha (572 aa).

The region spanning 132-572 is the Urease domain; that stretch reads GGFDSHIHFI…LPMAQRYFMY (441 aa). Residues His137, His139, and Lys220 each contribute to the Ni(2+) site. Lys220 bears the N6-carboxylysine mark. His222 contributes to the substrate binding site. Ni(2+)-binding residues include His249 and His275. His323 functions as the Proton donor in the catalytic mechanism. Asp363 contacts Ni(2+).

Belongs to the metallo-dependent hydrolases superfamily. Urease alpha subunit family. Heterotrimer of UreA (gamma), UreB (beta) and UreC (alpha) subunits. Three heterotrimers associate to form the active enzyme. It depends on Ni cation as a cofactor. In terms of processing, carboxylation allows a single lysine to coordinate two nickel ions.

It localises to the cytoplasm. It catalyses the reaction urea + 2 H2O + H(+) = hydrogencarbonate + 2 NH4(+). It participates in nitrogen metabolism; urea degradation; CO(2) and NH(3) from urea (urease route): step 1/1. The chain is Urease subunit alpha from Bradyrhizobium diazoefficiens (strain JCM 10833 / BCRC 13528 / IAM 13628 / NBRC 14792 / USDA 110).